Consider the following 366-residue polypeptide: Glucan organizing enzyme 1 (366 aa).

Over 1–24 (MLPLWARGGKPIVIPLPQKRHITL) the chain is Extracellular. A helical transmembrane segment spans residues 25 to 45 (PALPILLLLLGTGFLLHSLFF). The Cytoplasmic segment spans residues 46–366 (PPPPPHPPGK…ETYKKWKRGH (321 aa)).

The protein belongs to the glycosyltransferase 32 family.

It is found in the cell membrane. Plays a role in the localization of glycogen rosettes to the plasma membrane. Required for correct cell wall organization and may facilitate the connection between beta-1,3-glucan and beta-1,6-glucan in the cell wall. This chain is Glucan organizing enzyme 1, found in Cryptococcus neoformans var. grubii serotype A (strain H99 / ATCC 208821 / CBS 10515 / FGSC 9487) (Filobasidiella neoformans var. grubii).